Consider the following 688-residue polypeptide: Pescadillo homolog (688 aa).

Residues 351–470 (EVASLFASFT…KLLRHDLYAP (120 aa)) enclose the BRCT domain. Disordered regions lie at residues 411–442 (RPPLPESALPPLPQNPGEGAEKAPRVRPGTRM) and 496–688 (AEQE…TKGR). Residues 412 to 424 (PPLPESALPPLPQ) are compositionally biased toward pro residues. Residues 496-536 (AEQESDGEAERQAEEENEEEESEVEGLSMDKEMVETENSEA) adopt a coiled-coil conformation. 4 stretches are compositionally biased toward acidic residues: residues 510–519 (EENEEEESEV), 530–544 (ETENSEAGESDEESV), 554–565 (GSDDEEEESEED), and 576–589 (EAADVQSESEDDEE). The span at 619-634 (KKSKKQKPLAKKHAAQ) shows a compositional bias: basic residues. Residues 627–686 (LAKKHAAQKKKEQEELERQKMMMSRKKRKLLDKMLYSNKKKDEEAEKLRRKRRKIEQGTK) are a coiled coil. Positions 635-646 (KKKEQEELERQK) are enriched in basic and acidic residues.

It belongs to the pescadillo family. In terms of assembly, component of the NOP7 complex, composed of ERB1, NOP7 and YTM1. The complex is held together by ERB1, which interacts with NOP7 via its N-terminal domain and with YTM1 via a high-affinity interaction between the seven-bladed beta-propeller domains of the 2 proteins. The NOP7 complex associates with the 66S pre-ribosome.

Its subcellular location is the nucleus. It localises to the nucleolus. The protein localises to the nucleoplasm. Component of the NOP7 complex, which is required for maturation of the 25S and 5.8S ribosomal RNAs and formation of the 60S ribosome. The chain is Pescadillo homolog from Coccidioides immitis (strain RS) (Valley fever fungus).